The sequence spans 232 residues: (S)-2-haloacid dehalogenase (232 aa).

Asp10 (nucleophile) is an active-site residue. An (S)-2-haloacid is bound by residues 11–12 (LY), Arg41, and 118–119 (SN). The important for catalytic activity stretch occupies residues 175–180 (SSNAWD).

This sequence belongs to the HAD-like hydrolase superfamily. S-2-haloalkanoic acid dehalogenase family. Homodimer.

The enzyme catalyses an (S)-2-haloacid + H2O = a (2R)-2-hydroxycarboxylate + a halide anion + H(+). The catalysed reaction is (S)-2-chloropropanoate + H2O = (R)-lactate + chloride + H(+). Catalyzes the hydrolytic dehalogenation of small (S)-2-haloalkanoic acids to yield the corresponding (R)-2-hydroxyalkanoic acids. Acts on acids of short chain lengths, C(2) to C(4), with inversion of configuration at C-2. Active with 2-halogenated carboxylic acids and converts only the S-isomer (or L-isomer) of 2-chloropropionic acid with inversion of configuration to produce R-lactate (or D-isomer). The sequence is that of (S)-2-haloacid dehalogenase from Pseudomonas sp. (strain YL).